The following is a 203-amino-acid chain: Probable GTP-binding protein EngB (203 aa).

Positions 24–199 constitute an EngB-type G domain; that stretch reads DGSEVAFAGR…HTVIETWLGL (176 aa). Residues 32-39, 59-63, 77-80, 144-147, and 178-180 contribute to the GTP site; these read GRSNAGKS, GRTQQ, DLPG, TKAD, and FSS. Mg(2+) is bound by residues Ser39 and Thr61.

The protein belongs to the TRAFAC class TrmE-Era-EngA-EngB-Septin-like GTPase superfamily. EngB GTPase family. The cofactor is Mg(2+).

Necessary for normal cell division and for the maintenance of normal septation. The chain is Probable GTP-binding protein EngB from Xylella fastidiosa (strain 9a5c).